The following is a 455-amino-acid chain: Catalase-like protein (455 aa).

The disordered stretch occupies residues 1-25; sequence MSQQDKKLTGVFGHPVSDRENSMTA.

Belongs to the catalase family.

Functionally, catalytically inactive. This is Catalase-like protein (katB) from Staphylococcus aureus.